Consider the following 254-residue polypeptide: MAGILSKPNYNQFLESLIKLLAQTSGKDKIAKILQYGAKLLGYIFLKRSKHWVDVMKKLETTSGSARKVWRLGNTLAEQQKILALFKVKNPFAFLNILALIRQSGMYFYWVFDHLILGTNIGLCKFDTVKLGWYSSVSWFFGLLCSIIIDLNTLAIMLKKEKSLRLTITQNKINANNNNIDTHTITSEVENKAIIDQFNEVIKKKNEIYLNCAKNGSDLIIASTLLKIYPFSQGTIGISGIISALIGAYQMWPK.

The Cytoplasmic segment spans residues 1 to 91 (MAGILSKPNY…ILALFKVKNP (91 aa)). A helical membrane pass occupies residues 92-112 (FAFLNILALIRQSGMYFYWVF). Residues 113–227 (DHLILGTNIG…DLIIASTLLK (115 aa)) lie on the Lumenal side of the membrane. Residues 228-248 (IYPFSQGTIGISGIISALIGA) form a helical membrane-spanning segment. Residues 249–254 (YQMWPK) lie on the Cytoplasmic side of the membrane.

This sequence belongs to the peroxin-11 family.

It localises to the peroxisome membrane. Involved in peroxisomal proliferation. Could participate in peroxisomal elongation or fission. May be involved in parceling of peroxisomes into regular quanta. This is Peroxisomal membrane protein 11 homolog (pex11) from Dictyostelium discoideum (Social amoeba).